A 429-amino-acid polypeptide reads, in one-letter code: MPAIVLIGAQWGDEGKGKATDLLGGRLQWVVRYQGGNNAGHTVVLPNGDKFALHLIPSGILTPGVTNVIGNGVVVDPGVLLTELAGLDERGVDTSRLLLSADAHLIMPYHVAIDKVTERFLGAKKIGTTGRGIGPCYQDKLARVGVRVQDVLDEKILTQKVEAALEFKNQVLVKIYNRKALDPQQVVDEVLEQADGFKHRIADTRLQLNEALERGETVLLEGSQGTLLDVDHGTYPYVTSSNPTSGGAAVGSGIGPTKITTVLGILKAYTTRVGSGPFPTELFDQNGEYLAKTGGEVGVTTGRARRTGWFDAVIARYATRVNGITDYFLTKLDVLSSLDTIPICVGYDVDGVRYDEMPMSQTDVHHAKPIYEEMPGWWEDISHARTFEELPKNAQNYVLRLEELSGAYISCIGVGPGRDETIVRRDVVR.

GTP is bound by residues 12-18 (GDEGKGK) and 40-42 (GHT). Aspartate 13 (proton acceptor) is an active-site residue. Aspartate 13 and glycine 40 together coordinate Mg(2+). Residues 13 to 16 (DEGK), 38 to 41 (NAGH), threonine 129, arginine 143, glutamine 224, threonine 239, and arginine 303 contribute to the IMP site. Residue histidine 41 is the Proton donor of the active site. Residue 299 to 305 (VTTGRAR) coordinates substrate. GTP-binding positions include arginine 305, 331–333 (KLD), and 413–415 (GVG).

The protein belongs to the adenylosuccinate synthetase family. In terms of assembly, homodimer. Mg(2+) serves as cofactor.

It localises to the cytoplasm. It carries out the reaction IMP + L-aspartate + GTP = N(6)-(1,2-dicarboxyethyl)-AMP + GDP + phosphate + 2 H(+). It participates in purine metabolism; AMP biosynthesis via de novo pathway; AMP from IMP: step 1/2. In terms of biological role, plays an important role in the de novo pathway of purine nucleotide biosynthesis. Catalyzes the first committed step in the biosynthesis of AMP from IMP. The polypeptide is Adenylosuccinate synthetase (Rhodococcus jostii (strain RHA1)).